Reading from the N-terminus, the 134-residue chain is Small ribosomal subunit protein uS11 (134 aa).

Belongs to the universal ribosomal protein uS11 family. In terms of assembly, part of the 30S ribosomal subunit. Interacts with proteins S7 and S18. Binds to IF-3.

Its function is as follows. Located on the platform of the 30S subunit, it bridges several disparate RNA helices of the 16S rRNA. Forms part of the Shine-Dalgarno cleft in the 70S ribosome. The chain is Small ribosomal subunit protein uS11 from Salinibacter ruber (strain DSM 13855 / M31).